The primary structure comprises 123 residues: Small ribosomal subunit protein uS13 (123 aa).

The disordered stretch occupies residues 92–123 (HRRGLPVRGQKTKTNARTRKGPKKLVVSRKKK).

It belongs to the universal ribosomal protein uS13 family. Part of the 30S ribosomal subunit. Forms a loose heterodimer with protein S19. Forms two bridges to the 50S subunit in the 70S ribosome.

Functionally, located at the top of the head of the 30S subunit, it contacts several helices of the 16S rRNA. In the 70S ribosome it contacts the 23S rRNA (bridge B1a) and protein L5 of the 50S subunit (bridge B1b), connecting the 2 subunits; these bridges are implicated in subunit movement. Contacts the tRNAs in the A and P-sites. This chain is Small ribosomal subunit protein uS13, found in Clostridium tetani (strain Massachusetts / E88).